The sequence spans 76 residues: Omega/Kappa-hexatoxin-Hv1h (76 aa).

An N-terminal signal peptide occupies residues 1-22; that stretch reads MNTATGFIVLLVLATILGGIEA. Positions 23 to 35 are excised as a propeptide; that stretch reads GESHMRKDAMGRV. Disulfide bonds link C40–C55, C47–C60, and C54–C74.

It belongs to the neurotoxin 08 (Shiva) family. 02 (omega/kappa toxin) subfamily. Expressed by the venom gland.

Its subcellular location is the secreted. Toxin that may inhibit ion channels. The chain is Omega/Kappa-hexatoxin-Hv1h from Hadronyche versuta (Blue mountains funnel-web spider).